The chain runs to 362 residues: Exopolygalacturonase (362 aa).

PbH1 repeat units follow at residues 138 to 164, 165 to 186, 188 to 208, and 218 to 239; these read CKNLTFERFKISAAETSINTDGIHIGR, SDGVNIINTEIKTGDDCISLGD, SKNINITNITCGPGHGISVGS, and VVGIYVKNCTITGSQNGVRIKT. Asparagine 140 carries N-linked (GlcNAc...) asparagine glycosylation. The Proton donor role is filled by aspartate 179. N-linked (GlcNAc...) asparagine glycosylation is found at asparagine 192 and asparagine 195. Histidine 202 is an active-site residue. An N-linked (GlcNAc...) asparagine glycan is attached at asparagine 225.

This sequence belongs to the glycosyl hydrolase 28 family. In terms of tissue distribution, pollen tubes growing through the style during pollination.

It localises to the secreted. The protein resides in the cell wall. The enzyme catalyses [(1-&gt;4)-alpha-D-galacturonosyl](n) + H2O = alpha-D-galacturonate + [(1-&gt;4)-alpha-D-galacturonosyl](n-1). In terms of biological role, may function in depolymerizing pectin during pollen development, germination, and tube growth. Acts as an exo-polygalacturonase. In Oenothera organensis (Evening primrose), this protein is Exopolygalacturonase.